The chain runs to 469 residues: 3-phosphoshikimate 1-carboxyvinyltransferase (469 aa).

A disordered region spans residues 21 to 45; the sequence is KDTILTHSDQPRPLQSRANGPLTGK. Positions 52, 53, and 57 each coordinate 3-phosphoshikimate. K52 is a phosphoenolpyruvate binding site. 2 residues coordinate phosphoenolpyruvate: G125 and R153. Residues S199, Q201, D352, and K379 each coordinate 3-phosphoshikimate. A phosphoenolpyruvate-binding site is contributed by Q201. D352 acts as the Proton acceptor in catalysis. Phosphoenolpyruvate contacts are provided by R383 and R426.

It belongs to the EPSP synthase family. Monomer.

The protein localises to the cytoplasm. The enzyme catalyses 3-phosphoshikimate + phosphoenolpyruvate = 5-O-(1-carboxyvinyl)-3-phosphoshikimate + phosphate. The protein operates within metabolic intermediate biosynthesis; chorismate biosynthesis; chorismate from D-erythrose 4-phosphate and phosphoenolpyruvate: step 6/7. Catalyzes the transfer of the enolpyruvyl moiety of phosphoenolpyruvate (PEP) to the 5-hydroxyl of shikimate-3-phosphate (S3P) to produce enolpyruvyl shikimate-3-phosphate and inorganic phosphate. The sequence is that of 3-phosphoshikimate 1-carboxyvinyltransferase from Bradyrhizobium diazoefficiens (strain JCM 10833 / BCRC 13528 / IAM 13628 / NBRC 14792 / USDA 110).